The primary structure comprises 237 residues: MYSVLLNPSNTEIYSFLTERIYRELVVIFATCKVNYKGRAESVASESPRLIILKPDGTVIIHESVKREPLNWQPPGTKIEIMNDYPLKIVAQRKRPKEVIEIDLKEVFYITSAEVKDGDFVIKGREIDIVNTIIQNPSMIEEGFVPLTREYNTPYGKIDLVGLDKKGNFVIIEVKRSKAQLSAVSQLYRYYLHIRETKEDKVRGILVAPDLTTHARELLQKLGLEFIRYDIQKYSSY.

The protein belongs to the NucS endonuclease family.

It localises to the cytoplasm. Cleaves both 3' and 5' ssDNA extremities of branched DNA structures. The polypeptide is Endonuclease NucS (Saccharolobus islandicus (strain L.S.2.15 / Lassen #1) (Sulfolobus islandicus)).